The following is a 132-amino-acid chain: S-protein homolog 15 (132 aa).

Positions 1-20 (MSRLIFFILVTAIYFVGNEA) are cleaved as a signal peptide.

This sequence belongs to the plant self-incompatibility (S1) protein family.

It localises to the secreted. The sequence is that of S-protein homolog 15 from Arabidopsis thaliana (Mouse-ear cress).